Reading from the N-terminus, the 227-residue chain is Max dimerization protein 1 (227 aa).

The Nuclear localization signal motif lies at 21–48 (RREREAEHGYASMLPYSKDRDAFKRRNK). Disordered stretches follow at residues 30 to 66 (YASM…MEKN), 142 to 161 (MDSV…REEL), and 184 to 227 (GWSS…GLGL). Residues 55 to 107 (SSRSTHNEMEKNRRAHLRLCLEKLKGLVPLGPESSRHTTLSLLTKAKLHIKKL) form the bHLH domain. Residues 198–211 (MQSLGSDEGYSSAT) are compositionally biased toward polar residues. A compositionally biased stretch (basic and acidic residues) spans 216-227 (KLQDGHKAGLGL).

As to quaternary structure, heterodimer with MAX; the interaction is required for DNA-binding. DNA binding requires dimerization with another bHLH protein; does not form homodimers, and does not bind to DNA in the absence of MAX in vitro. Interacts with RNF17. Post-translationally, ubiquitinated by BIRC2/c-IAP1, leading to its subsequent degradation by the proteasome.

Its subcellular location is the nucleus. Component of a transcriptional repressor complex together with MAX. In complex with MAX binds to the core DNA sequence 5'-CAC[GA]TG-3'. Antagonizes MYC transcriptional activity by competing with MYC for MAX binding. Binds to the TERT promoter and represses telomerase expression, possibly by interfering with MYC binding. The polypeptide is Max dimerization protein 1 (Mxd1) (Mus musculus (Mouse)).